Reading from the N-terminus, the 427-residue chain is Glutamate-1-semialdehyde 2,1-aminomutase (427 aa).

K267 carries the N6-(pyridoxal phosphate)lysine modification.

This sequence belongs to the class-III pyridoxal-phosphate-dependent aminotransferase family. HemL subfamily. In terms of assembly, homodimer. Requires pyridoxal 5'-phosphate as cofactor.

It localises to the cytoplasm. It carries out the reaction (S)-4-amino-5-oxopentanoate = 5-aminolevulinate. The protein operates within porphyrin-containing compound metabolism; protoporphyrin-IX biosynthesis; 5-aminolevulinate from L-glutamyl-tRNA(Glu): step 2/2. This is Glutamate-1-semialdehyde 2,1-aminomutase from Sulfurihydrogenibium azorense (strain DSM 15241 / OCM 825 / Az-Fu1).